The primary structure comprises 295 residues: MAVVTMRQLLESGVHFGHQTRRWNPKMKRFIFTERNGIYIIDLRQTLDYIEKAYEFVRGTVAEGGSILFVGTKKQAQEAIAEQATRVGQPYVNHRWLGGMLTNFQTVYKRLQRMKELEALGDLSGTAAGYTKKETLQLNREKGKLSRTLGGLRDMQKLPAAIWVVDTKKEHIAVDEARKLGIPVIAVLDTNCDPDEVDYPIPGNDDAIRSAELLTKVVAAAVADGLIARSGRRRGTDEKPEAGVATDEPLAEWERELLEEPKKSDEQPAKSDELPVKTDEQPTKSDEQPAAAAAE.

The tract at residues 232–295 (RRRGTDEKPE…DEQPAAAAAE (64 aa)) is disordered. Residues 252–287 (EWERELLEEPKKSDEQPAKSDELPVKTDEQPTKSDE) are compositionally biased toward basic and acidic residues.

This sequence belongs to the universal ribosomal protein uS2 family.

The chain is Small ribosomal subunit protein uS2 from Salinispora tropica (strain ATCC BAA-916 / DSM 44818 / JCM 13857 / NBRC 105044 / CNB-440).